The primary structure comprises 105 residues: Small ribosomal subunit protein uS10 (105 aa).

The protein belongs to the universal ribosomal protein uS10 family. As to quaternary structure, part of the 30S ribosomal subunit.

Involved in the binding of tRNA to the ribosomes. The chain is Small ribosomal subunit protein uS10 from Oleidesulfovibrio alaskensis (strain ATCC BAA-1058 / DSM 17464 / G20) (Desulfovibrio alaskensis).